The primary structure comprises 406 residues: uncharacterized protein (406 aa).

This sequence to S.pombe SpAC12C2.04.

The protein localises to the cytoplasm. It localises to the nucleus. This is an uncharacterized protein from Schizosaccharomyces pombe (strain 972 / ATCC 24843) (Fission yeast).